The sequence spans 645 residues: MNETECEDLIKSVKWTEPANLISLAVLEFINVLVIGGNCLVIAAVFCSNKLRSVTNFFIVNLAVADLLVGLAVLPFSATWEVFKVWIFGDLWCRIWLAVDVWMCTASILNLCAISLDRYVAVTRPVTYPSIMSTKKAKSLIAGIWVLSFFICFPPLVGWKDQKAVIQPTYPKGNHTLYYTTTMSSSEDGQLGLDSIKDQGEASLPPSPPHIGNGNAYNPYDPGFAPIDGSAEIRIAAIDSTSTSTTATTTTTASSSSTTETEMDLDLLNAPPQNRPQTISGSCPWKCELTNDRGYVLYSALGSFYIPMFVMLFFYWRIYRAAVRTTRAINQGFKTTKGSKGIGSRFEEQRLTLRIHRGRGSNQQDSMHSNGSTQSTTTTLGTPSPERLSKYATRRLHHHDKIKISVSYPSSENISELAGHGDVGHERRQSGNALFAVHYNGTNGRESTESQLYRQQQQHGVASSCYLQVGKGLPELARRQSNTSEAGGSGHSRPANKKMGRRNIKAQVKRFRMETKAAKTLAIIVGMFIFCWCPFFTMYIIRPFCQDCVDPLLFSVLFWLGYCNSAVNPMIYALFSKDFRFAFKRIICRCFCSRQSVSLKSSRRGSDMSAIRIRARTPSITPSAAAHSFGDESELHHSEMSNDPR.

The Extracellular portion of the chain corresponds to 1–25; that stretch reads MNETECEDLIKSVKWTEPANLISLA. N2 carries an N-linked (GlcNAc...) asparagine glycan. Residues 26–46 form a helical membrane-spanning segment; sequence VLEFINVLVIGGNCLVIAAVF. The Cytoplasmic segment spans residues 47–56; it reads CSNKLRSVTN. The chain crosses the membrane as a helical span at residues 57–77; it reads FFIVNLAVADLLVGLAVLPFS. The Extracellular segment spans residues 78-94; the sequence is ATWEVFKVWIFGDLWCR. A disulfide bridge links C93 with C287. Residues 95–115 form a helical membrane-spanning segment; sequence IWLAVDVWMCTASILNLCAIS. Residues 116–138 are Cytoplasmic-facing; sequence LDRYVAVTRPVTYPSIMSTKKAK. A helical membrane pass occupies residues 139–159; it reads SLIAGIWVLSFFICFPPLVGW. Residues 160–295 are Extracellular-facing; the sequence is KDQKAVIQPT…KCELTNDRGY (136 aa). N-linked (GlcNAc...) asparagine glycosylation is present at N174. The tract at residues 190 to 212 is disordered; it reads QLGLDSIKDQGEASLPPSPPHIG. A helical transmembrane segment spans residues 296–316; sequence VLYSALGSFYIPMFVMLFFYW. At 317–520 the chain is on the cytoplasmic side; it reads RIYRAAVRTT…FRMETKAAKT (204 aa). Disordered stretches follow at residues 358-386 and 479-500; these read GRGS…PSPE and RQSN…KKMG. Positions 369-385 are enriched in low complexity; the sequence is SNGSTQSTTTTLGTPSP. A helical membrane pass occupies residues 521–541; the sequence is LAIIVGMFIFCWCPFFTMYII. The Extracellular portion of the chain corresponds to 542–551; sequence RPFCQDCVDP. The chain crosses the membrane as a helical span at residues 552-572; it reads LLFSVLFWLGYCNSAVNPMIY. Topologically, residues 573–645 are cytoplasmic; sequence ALFSKDFRFA…HHSEMSNDPR (73 aa). Positions 621-645 are disordered; it reads TPSAAAHSFGDESELHHSEMSNDPR. The span at 629–645 shows a compositional bias: basic and acidic residues; that stretch reads FGDESELHHSEMSNDPR.

Belongs to the G-protein coupled receptor 1 family. As to expression, highly enriched in mushroom body neuropil and in the ellipsoid body (at protein level). Expressed in oviduct epithelium (at protein level). Expressed in the adult and larval brain, thoracic and abdominal ganglia, terminal cells of the larval tracheal system, muscle, mature eggs and reproductive system.

Its subcellular location is the cell membrane. Its function is as follows. Receptor for octopamine (OA) which is a neurotransmitter, neurohormone and neuromodulator in invertebrates. Stimulates intracellular accumulation of cAMP and Ca(2+) following ligand binding. Required for ovulation. Following activation on mature follicle cells by OA, induces activity of the metalloprotease Mmp2 which leads to breakdown of the posterior follicle wall, resulting in ovulation. Ligand binding probably also leads to activation of CamKII which is also required for ovulation. Modulates sleep/wake behavior by acting in neurons of the pars intercerebralis to promote wakefulness. Plays a role in courtship conditioning where the courtship behavior of males rejected by already mated females is inhibited with further females. Required in the mushroom body for appetitive olfactory learning. Specifically conveys the short-term reinforcing effects of sweet taste. In insulin-producing cells of the brain, plays a role in inhibiting transcription of insulin-like peptide Ilp3. Also plays a role in social behavior by modulating male agression. The polypeptide is Octopamine receptor Oamb (Drosophila melanogaster (Fruit fly)).